A 420-amino-acid chain; its full sequence is tRNA(Ile)-lysidine synthase (420 aa).

An ATP-binding site is contributed by 28–33 (SGGLDS).

The protein belongs to the tRNA(Ile)-lysidine synthase family.

It localises to the cytoplasm. It catalyses the reaction cytidine(34) in tRNA(Ile2) + L-lysine + ATP = lysidine(34) in tRNA(Ile2) + AMP + diphosphate + H(+). In terms of biological role, ligates lysine onto the cytidine present at position 34 of the AUA codon-specific tRNA(Ile) that contains the anticodon CAU, in an ATP-dependent manner. Cytidine is converted to lysidine, thus changing the amino acid specificity of the tRNA from methionine to isoleucine. This Hydrogenovibrio crunogenus (strain DSM 25203 / XCL-2) (Thiomicrospira crunogena) protein is tRNA(Ile)-lysidine synthase.